Consider the following 541-residue polypeptide: MEAQDPLFDLIGLGFGPANLAIAGAIVEKWEGPSAGGDGGISAHKVLFIEKQPEFQWHPGMLLPNTRMQISFLKDLATLRSPQSPLTFLSYLHAEGRLLPFINRGSFTPTRREYFDYLSWAARTVESKGIKVQYGEEVVSIRGSEDNTVEVHSRDVKTGTIVIRRTRNLVISPGGNPKLPPNISLLYPHPRILHSSRYATSVDQLLGTLSPANRPLRIAVIGSGQSAAEVTLDLHSRLSSMPGGDRPHAIDMIFRNGSLKPSDDSPFSNEIFDPDTTEVIYNLPTQSDRENILKEYNNTNYSVVNPRTIDAMYEVMYDQKLDDAIARRKGDKATPSAARITMHPHMTLYFADDLPQLAETDSATETSQEGIRLTLQNVFSQAQSTRDYDAVVCATGYDRTSWLRMLTSSDIGKHFGLNLSSDPVQLVPSTEIPKGPDGSLFDASEEEATWRPASPITPASPSPPSTPTSSALSQSRMLGQLPITKLYITREYCLVPNSPQFKPRIYLQGCTEATHGLSESLLSILGVRAGLVVDDLWKNSQ.

Residues 50 to 58 (EKQPEFQWH) and Gln-69 each bind FAD. Lys-74 lines the substrate pocket. An NADP(+)-binding site is contributed by 223–226 (SGQS). Residues 269-272 (NEIF) and Asn-300 each bind substrate. 300-302 (NYS) contributes to the NADP(+) binding site. Positions 430–474 (TEIPKGPDGSLFDASEEEATWRPASPITPASPSPPSTPTSSALSQ) are disordered. 520 to 522 (SLL) lines the FAD pocket. Residue Ser-523 participates in substrate binding.

It belongs to the lysine N(6)-hydroxylase/L-ornithine N(5)-oxygenase family. As to quaternary structure, homotetramer. The cofactor is FAD.

The catalysed reaction is L-ornithine + NADPH + O2 = N(5)-hydroxy-L-ornithine + NADP(+) + H2O. The enzyme catalyses L-ornithine + NADH + O2 = N(5)-hydroxy-L-ornithine + NAD(+) + H2O. The protein operates within siderophore biosynthesis. Functionally, L-ornithine N(5)-monooxygenase; part of the siderophore basidioferrin biosynthetic pathway. The biosynthesis of basidioferrin depends on the hydroxylation of ornithine to N(5)-hydroxyornithine, catalyzed by the monooxygenase SMO1. The second step, the acylation of N(5)-hydroxy-L-ornithine is catalyzed by a not yet identified N-acyltransferase. Finally, assembly of basidioferrin is catalyzed by the nonribosomal peptide synthase (NRPS) NPS2 via amide bond formation between three L-AHO molecules to release the linear L-AHO trimer. The sequence is that of L-ornithine N(5)-monooxygenase (SMO1) from Ceriporiopsis subvermispora (strain B) (White-rot fungus).